The chain runs to 623 residues: Isocitrate dehydrogenase kinase/phosphatase (623 aa).

ATP contacts are provided by residues 344 to 350 (APGIKGM) and Lys365. Asp400 is a catalytic residue.

The protein belongs to the AceK family.

It localises to the cytoplasm. The catalysed reaction is L-seryl-[isocitrate dehydrogenase] + ATP = O-phospho-L-seryl-[isocitrate dehydrogenase] + ADP + H(+). Functionally, bifunctional enzyme which can phosphorylate or dephosphorylate isocitrate dehydrogenase (IDH) on a specific serine residue. This is a regulatory mechanism which enables bacteria to bypass the Krebs cycle via the glyoxylate shunt in response to the source of carbon. When bacteria are grown on glucose, IDH is fully active and unphosphorylated, but when grown on acetate or ethanol, the activity of IDH declines drastically concomitant with its phosphorylation. The chain is Isocitrate dehydrogenase kinase/phosphatase from Polaromonas naphthalenivorans (strain CJ2).